A 184-amino-acid chain; its full sequence is V-type proton ATPase subunit E (184 aa).

Belongs to the V-ATPase E subunit family.

Functionally, produces ATP from ADP in the presence of a proton gradient across the membrane. The protein is V-type proton ATPase subunit E of Finegoldia magna (strain ATCC 29328 / DSM 20472 / WAL 2508) (Peptostreptococcus magnus).